Consider the following 82-residue polypeptide: Cyclin-dependent protein kinase inhibitor SMR5 (82 aa).

Positions 1–26 are disordered; it reads MEEKNYDDGDTVTVDDDYQMGCTTPT. Over residues 8–18 the composition is skewed to acidic residues; it reads DGDTVTVDDDY.

Interacts with CDKA-1 and D-type cyclins. Expressed in columella cells in the roots and in root meristems after induction.

Functionally, probable cyclin-dependent protein kinase (CDK) inhibitor that functions as a repressor of mitosis in the endoreduplication cell cycle. Acts as a potent cell cycle inhibitor, regulating a hydroxyurea-dependent checkpoint in leaves. Essential to activate a high-light-dependent cell cycle checkpoint. The chain is Cyclin-dependent protein kinase inhibitor SMR5 from Arabidopsis thaliana (Mouse-ear cress).